Consider the following 339-residue polypeptide: Anthranilate phosphoribosyltransferase (339 aa).

5-phospho-alpha-D-ribose 1-diphosphate contacts are provided by residues Gly-81, 84-85 (GD), Thr-89, 91-94 (NIST), 109-117 (KHGNRNLSS), and Ala-121. Gly-81 contributes to the anthranilate binding site. Position 93 (Ser-93) interacts with Mg(2+). Asn-112 serves as a coordination point for anthranilate. An anthranilate-binding site is contributed by Arg-167. Positions 226 and 227 each coordinate Mg(2+).

The protein belongs to the anthranilate phosphoribosyltransferase family. In terms of assembly, homodimer. Mg(2+) is required as a cofactor.

It catalyses the reaction N-(5-phospho-beta-D-ribosyl)anthranilate + diphosphate = 5-phospho-alpha-D-ribose 1-diphosphate + anthranilate. The protein operates within amino-acid biosynthesis; L-tryptophan biosynthesis; L-tryptophan from chorismate: step 2/5. In terms of biological role, catalyzes the transfer of the phosphoribosyl group of 5-phosphorylribose-1-pyrophosphate (PRPP) to anthranilate to yield N-(5'-phosphoribosyl)-anthranilate (PRA). The chain is Anthranilate phosphoribosyltransferase from Roseobacter denitrificans (strain ATCC 33942 / OCh 114) (Erythrobacter sp. (strain OCh 114)).